The chain runs to 302 residues: Proteasome subunit beta (302 aa).

Residues 1–50 (MTITGSRGFPDGYLAPGSSFLDFAAQHAPTIMPGTQPTFDTIPQDIAPHG) constitute a propeptide, removed in mature form; by autocatalysis. Threonine 51 functions as the Nucleophile in the catalytic mechanism. Residues 277 to 302 (EPGRDGPGNRLPSQGSATIIPESDQS) form a disordered region. Over residues 287–302 (LPSQGSATIIPESDQS) the composition is skewed to polar residues.

The protein belongs to the peptidase T1B family. The 20S proteasome core is composed of 14 alpha and 14 beta subunits that assemble into four stacked heptameric rings, resulting in a barrel-shaped structure. The two inner rings, each composed of seven catalytic beta subunits, are sandwiched by two outer rings, each composed of seven alpha subunits. The catalytic chamber with the active sites is on the inside of the barrel. Has a gated structure, the ends of the cylinder being occluded by the N-termini of the alpha-subunits. Is capped by the proteasome-associated ATPase, ARC.

The protein localises to the cytoplasm. It catalyses the reaction Cleavage of peptide bonds with very broad specificity.. Its pathway is protein degradation; proteasomal Pup-dependent pathway. The formation of the proteasomal ATPase ARC-20S proteasome complex, likely via the docking of the C-termini of ARC into the intersubunit pockets in the alpha-rings, may trigger opening of the gate for substrate entry. Interconversion between the open-gate and close-gate conformations leads to a dynamic regulation of the 20S proteasome proteolysis activity. Component of the proteasome core, a large protease complex with broad specificity involved in protein degradation. This is Proteasome subunit beta from Jonesia denitrificans (strain ATCC 14870 / DSM 20603 / BCRC 15368 / CIP 55.134 / JCM 11481 / NBRC 15587 / NCTC 10816 / Prevot 55134) (Listeria denitrificans).